A 223-amino-acid chain; its full sequence is Deoxyribose-phosphate aldolase (223 aa).

Asp92 serves as the catalytic Proton donor/acceptor. Lys158 (schiff-base intermediate with acetaldehyde) is an active-site residue. Lys188 acts as the Proton donor/acceptor in catalysis.

It belongs to the DeoC/FbaB aldolase family. DeoC type 1 subfamily.

The protein localises to the cytoplasm. The enzyme catalyses 2-deoxy-D-ribose 5-phosphate = D-glyceraldehyde 3-phosphate + acetaldehyde. It functions in the pathway carbohydrate degradation; 2-deoxy-D-ribose 1-phosphate degradation; D-glyceraldehyde 3-phosphate and acetaldehyde from 2-deoxy-alpha-D-ribose 1-phosphate: step 2/2. Its function is as follows. Catalyzes a reversible aldol reaction between acetaldehyde and D-glyceraldehyde 3-phosphate to generate 2-deoxy-D-ribose 5-phosphate. The chain is Deoxyribose-phosphate aldolase from Mycobacterium avium (strain 104).